A 172-amino-acid polypeptide reads, in one-letter code: MAEQKSSYGYEELLACGRGEMFGPGNAQLPLPPMLMIHRITEISETGGAFDKGYIRAEYDVRPDDWYFPCHFQGNPIMPGCLGLDGMWQLTGFFLGWLGEPGRGMALSTGEVKFKGMVRPHTKLLEYGIDFKRVMRGRLVLGTADGCLKADGELIYQATDLRVGLSKEGSAQ.

His-71 is an active-site residue.

It belongs to the thioester dehydratase family. FabA subfamily. Homodimer.

The protein resides in the cytoplasm. The enzyme catalyses a (3R)-hydroxyacyl-[ACP] = a (2E)-enoyl-[ACP] + H2O. It catalyses the reaction (3R)-hydroxydecanoyl-[ACP] = (2E)-decenoyl-[ACP] + H2O. The catalysed reaction is (2E)-decenoyl-[ACP] = (3Z)-decenoyl-[ACP]. Its pathway is lipid metabolism; fatty acid biosynthesis. Functionally, necessary for the introduction of cis unsaturation into fatty acids. Catalyzes the dehydration of (3R)-3-hydroxydecanoyl-ACP to E-(2)-decenoyl-ACP and then its isomerization to Z-(3)-decenoyl-ACP. Can catalyze the dehydratase reaction for beta-hydroxyacyl-ACPs with saturated chain lengths up to 16:0, being most active on intermediate chain length. The chain is 3-hydroxydecanoyl-[acyl-carrier-protein] dehydratase from Brucella ovis (strain ATCC 25840 / 63/290 / NCTC 10512).